The sequence spans 660 residues: Squalene--hopene cyclase (660 aa).

Residues 73 to 114 (EAKIGNYLRRVQGAHGGWPLVHDGEFDMSASVKAYFALKMIG) form a PFTB 1 repeat. Asp394 serves as the catalytic Proton donor. PFTB repeat units lie at residues 419 to 460 (IDRG…GALL) and 536 to 586 (IRKA…ALMA).

The protein belongs to the terpene cyclase/mutase family.

Its subcellular location is the cell membrane. It carries out the reaction squalene = hop-22(29)-ene. The catalysed reaction is squalene + H2O = hopan-22-ol. It functions in the pathway secondary metabolite biosynthesis; hopanoid biosynthesis. Catalyzes the cyclization of squalene into hopene. The sequence is that of Squalene--hopene cyclase (shc) from Bradyrhizobium diazoefficiens (strain JCM 10833 / BCRC 13528 / IAM 13628 / NBRC 14792 / USDA 110).